The primary structure comprises 62 residues: Large ribosomal subunit protein uL29 (62 aa).

Belongs to the universal ribosomal protein uL29 family.

The protein is Large ribosomal subunit protein uL29 of Desulfatibacillum aliphaticivorans.